Here is a 96-residue protein sequence, read N- to C-terminus: Small ribosomal subunit protein uS19 (96 aa).

The protein belongs to the universal ribosomal protein uS19 family.

Its function is as follows. Protein S19 forms a complex with S13 that binds strongly to the 16S ribosomal RNA. This is Small ribosomal subunit protein uS19 from Koribacter versatilis (strain Ellin345).